A 64-amino-acid chain; its full sequence is Large ribosomal subunit protein bL35 (64 aa).

2 stretches are compositionally biased toward basic residues: residues 1–15 and 27–42; these read MPKN…KRFK and AGKR…KKTR. Residues 1-45 form a disordered region; the sequence is MPKNKTHSGASKRFKITGSGKVLRERAGKRHLLEHKSSKKTRSLT.

The protein belongs to the bacterial ribosomal protein bL35 family.

This Streptomyces griseus subsp. griseus (strain JCM 4626 / CBS 651.72 / NBRC 13350 / KCC S-0626 / ISP 5235) protein is Large ribosomal subunit protein bL35.